A 302-amino-acid polypeptide reads, in one-letter code: CASP-like protein 4A2 (302 aa).

Residues 1–13 (MALQAQQQATPSP) show a composition bias toward polar residues. The interval 1 to 134 (MALQAQQQAT…APPPHAQVRS (134 aa)) is disordered. The Cytoplasmic portion of the chain corresponds to 1–154 (MALQAQQQAT…RKRRAAVMQR (154 aa)). Over residues 40–60 (VVVASTHHAAAAARYVPPRAT) the composition is skewed to low complexity. The segment covering 99-129 (KTPPPAPPLPAAPPPPPAASPAPAPRAPPPH) has biased composition (pro residues). Residues 155–175 (AALLARAAAAGLCLAALAVLA) form a helical membrane-spanning segment. Over 176 to 197 (SDTRRGWARDSYSNYAQFRYSE) the chain is Extracellular. A helical membrane pass occupies residues 198-218 (AVNVVGFLYSVFQFVALAELM). The Cytoplasmic segment spans residues 219–238 (RRNKHLIPHPKRDLFDFTMD). The chain crosses the membrane as a helical span at residues 239 to 256 (QVVAYLLISSSSSATARA). Over 257–273 (SDLIENWGSDSFPSMAN) the chain is Extracellular. A helical membrane pass occupies residues 274-294 (GSIAISFVAFVVFAICSLISA). Residues 295 to 302 (YNLFRRDM) lie on the Cytoplasmic side of the membrane.

It belongs to the Casparian strip membrane proteins (CASP) family. In terms of assembly, homodimer and heterodimers.

It localises to the cell membrane. The protein is CASP-like protein 4A2 of Zea mays (Maize).